We begin with the raw amino-acid sequence, 90 residues long: Probable Fe(2+)-trafficking protein (90 aa).

This sequence belongs to the Fe(2+)-trafficking protein family.

Functionally, could be a mediator in iron transactions between iron acquisition and iron-requiring processes, such as synthesis and/or repair of Fe-S clusters in biosynthetic enzymes. The polypeptide is Probable Fe(2+)-trafficking protein (Photobacterium profundum (strain SS9)).